Reading from the N-terminus, the 134-residue chain is Small ribosomal subunit protein bS6 (134 aa).

Residues 99-134 (EPSAMMQKRDRDERKDRERGRRRDEDGFSGDRNEEN) form a disordered region. Over residues 105–134 (QKRDRDERKDRERGRRRDEDGFSGDRNEEN) the composition is skewed to basic and acidic residues.

Belongs to the bacterial ribosomal protein bS6 family.

Binds together with bS18 to 16S ribosomal RNA. This chain is Small ribosomal subunit protein bS6, found in Methylobacterium nodulans (strain LMG 21967 / CNCM I-2342 / ORS 2060).